We begin with the raw amino-acid sequence, 1073 residues long: Semaphorin-6D (1073 aa).

The signal sequence occupies residues 1–20; that stretch reads MRVFLLCAYILLLMVSQLRA. Topologically, residues 21-662 are extracellular; it reads VSFPEDDEPL…GESNQMVHMN (642 aa). The region spanning 27–512 is the Sema domain; the sequence is DEPLNTVDYH…FSSCIIRIPL (486 aa). N-linked (GlcNAc...) asparagine glycosylation is present at N51. 4 disulfides stabilise this stretch: C108-C118, C136-C145, C259-C370, and C284-C329. Residue N283 is glycosylated (N-linked (GlcNAc...) asparagine). N435 and N461 each carry an N-linked (GlcNAc...) asparagine glycan. 4 disulfides stabilise this stretch: C477-C506, C515-C533, C521-C568, and C525-C541. The region spanning 514 to 569 is the PSI domain; sequence RCERYGSCKKSCIASRDPYCGWLSQGSCGRVTPGMLAEGYEQDTEFGNTAHLGDCH. N631 carries an N-linked (GlcNAc...) asparagine glycan. A helical transmembrane segment spans residues 663–683; the sequence is VLITCVFAAFVLGAFIAGVAV. Residues 684-1073 lie on the Cytoplasmic side of the membrane; sequence YCYRDMFVRK…SVRPLNKYTY (390 aa). A phosphoserine mark is found at S723, S734, and S744. Disordered stretches follow at residues 744 to 775, 787 to 825, 839 to 874, 914 to 1005, and 1021 to 1073; these read SRKELPPNGDTKSMVMDHRGQPPELAALPTPE, AMKSHSEKAHGHGASRKETPQFFPSSPPPHSPLSHGHIP, TSFSNSNAHKAEKKLQNIDHPLTKSSSKRDHRRSVD, SMSE…PTPT, and LQPS…KYTY. Residue T773 is modified to Phosphothreonine. A compositionally biased stretch (basic and acidic residues) spans 790–805; sequence SHSEKAHGHGASRKET. 3 positions are modified to phosphoserine: S931, S957, and S983. Over residues 931-942 the composition is skewed to polar residues; it reads SPPSTLPRNSPT. Composition is skewed to polar residues over residues 980–995 and 1021–1037; these read NLNSPNGVLLSRQPSM and LQPSLSRQSSYTSNGTL.

Belongs to the semaphorin family.

The protein localises to the cell membrane. Its subcellular location is the cytoplasm. Shows growth cone collapsing activity on dorsal root ganglion (DRG) neurons in vitro. May be a stop signal for the DRG neurons in their target areas, and possibly also for other neurons. May also be involved in the maintenance and remodeling of neuronal connections. Ligand of TREM2 with PLXNA1 as coreceptor in dendritic cells, plays a role in the generation of immune responses and skeletal homeostasis. The polypeptide is Semaphorin-6D (Homo sapiens (Human)).